The following is a 124-amino-acid chain: MaFF-interacting protein (124 aa).

The stretch at 54 to 96 (LVSEVEELYKSITALREKLLQAEQSLRNLKDIHMSLEKDVTAM) forms a coiled coil.

This sequence belongs to the tektin family. Interacts with MIS18A. Interacts (via its coiled-coil region) with MAFF. As to expression, strongly expressed in brain, kidney and ovary. Moderately expressed in liver, spleen, thymus, prostate, testis, small intestine and colon. Weakly expressed in heart, placenta, lung and leukocytes.

The protein localises to the cytoplasm. Its subcellular location is the nucleus. It localises to the nucleolus. Its function is as follows. Acts as a coactivator of MAFF transcriptional activity. Inhibits cell growth and colony-forming efficiency. This Homo sapiens (Human) protein is MaFF-interacting protein (MAFIP).